The sequence spans 264 residues: [LysW]-aminoadipate/[LysW]-glutamate kinase (264 aa).

Substrate-binding positions include 35-36, R62, and N167; that span reads GG.

It belongs to the acetylglutamate kinase family. LysZ subfamily.

Its subcellular location is the cytoplasm. The catalysed reaction is [amino-group carrier protein]-C-terminal-N-(1,4-dicarboxybutan-1-yl)-L-glutamine + ATP = [amino-group carrier protein]-C-terminal-N-(1-carboxy-5-phosphooxy-5-oxopentan-1-yl)-L-glutamine + ADP. It catalyses the reaction [amino-group carrier protein]-C-terminal-gamma-(L-glutamyl)-L-glutamate + ATP = [amino-group carrier protein]-C-terminal-gamma-(5-phospho-L-glutamyl)-L-glutamate + ADP. The protein operates within amino-acid biosynthesis; L-lysine biosynthesis via AAA pathway; L-lysine from L-alpha-aminoadipate (Thermus route): step 2/5. It participates in amino-acid biosynthesis; L-arginine biosynthesis. In terms of biological role, involved in both the arginine and lysine biosynthetic pathways. Phosphorylates the LysW-bound precursors glutamate (for arginine biosynthesis), respectively alpha-aminoadipate (for lysine biosynthesis). In Saccharolobus solfataricus (strain ATCC 35092 / DSM 1617 / JCM 11322 / P2) (Sulfolobus solfataricus), this protein is [LysW]-aminoadipate/[LysW]-glutamate kinase.